The sequence spans 352 residues: Protein RecA (352 aa).

An ATP-binding site is contributed by 67 to 74 (GPESSGKT).

Belongs to the RecA family.

It localises to the cytoplasm. Its function is as follows. Can catalyze the hydrolysis of ATP in the presence of single-stranded DNA, the ATP-dependent uptake of single-stranded DNA by duplex DNA, and the ATP-dependent hybridization of homologous single-stranded DNAs. It interacts with LexA causing its activation and leading to its autocatalytic cleavage. The chain is Protein RecA from Aggregatibacter actinomycetemcomitans (Actinobacillus actinomycetemcomitans).